Here is a 93-residue protein sequence, read N- to C-terminus: Pyrimidine/purine nucleoside phosphorylase (93 aa).

This sequence belongs to the nucleoside phosphorylase PpnP family.

It catalyses the reaction a purine D-ribonucleoside + phosphate = a purine nucleobase + alpha-D-ribose 1-phosphate. The catalysed reaction is adenosine + phosphate = alpha-D-ribose 1-phosphate + adenine. The enzyme catalyses cytidine + phosphate = cytosine + alpha-D-ribose 1-phosphate. It carries out the reaction guanosine + phosphate = alpha-D-ribose 1-phosphate + guanine. It catalyses the reaction inosine + phosphate = alpha-D-ribose 1-phosphate + hypoxanthine. The catalysed reaction is thymidine + phosphate = 2-deoxy-alpha-D-ribose 1-phosphate + thymine. The enzyme catalyses uridine + phosphate = alpha-D-ribose 1-phosphate + uracil. It carries out the reaction xanthosine + phosphate = alpha-D-ribose 1-phosphate + xanthine. Functionally, catalyzes the phosphorolysis of diverse nucleosides, yielding D-ribose 1-phosphate and the respective free bases. Can use uridine, adenosine, guanosine, cytidine, thymidine, inosine and xanthosine as substrates. Also catalyzes the reverse reactions. The sequence is that of Pyrimidine/purine nucleoside phosphorylase from Magnetococcus marinus (strain ATCC BAA-1437 / JCM 17883 / MC-1).